The following is a 426-amino-acid chain: Enolase (426 aa).

Residue Gln-163 coordinates (2R)-2-phosphoglycerate. The active-site Proton donor is the Glu-205. Mg(2+) contacts are provided by Asp-242, Glu-286, and Asp-313. Residues Lys-338, Arg-367, Ser-368, and Lys-389 each contribute to the (2R)-2-phosphoglycerate site. The active-site Proton acceptor is Lys-338.

This sequence belongs to the enolase family. Mg(2+) serves as cofactor.

Its subcellular location is the cytoplasm. It localises to the secreted. It is found in the cell surface. It carries out the reaction (2R)-2-phosphoglycerate = phosphoenolpyruvate + H2O. It functions in the pathway carbohydrate degradation; glycolysis; pyruvate from D-glyceraldehyde 3-phosphate: step 4/5. Its function is as follows. Catalyzes the reversible conversion of 2-phosphoglycerate (2-PG) into phosphoenolpyruvate (PEP). It is essential for the degradation of carbohydrates via glycolysis. This is Enolase from Helicobacter pylori (strain G27).